Reading from the N-terminus, the 257-residue chain is UPF0246 protein YaaA (257 aa).

Belongs to the UPF0246 family.

This Salmonella schwarzengrund (strain CVM19633) protein is UPF0246 protein YaaA.